The sequence spans 284 residues: Type II methyltransferase M1.DpnII (284 aa).

S-adenosyl-L-methionine contacts are provided by tryptophan 17, lysine 21, glycine 46, aspartate 62, aspartate 177, phenylalanine 178, and aspartate 194.

This sequence belongs to the N(4)/N(6)-methyltransferase family. As to quaternary structure, monomer. Homodimer.

It catalyses the reaction a 2'-deoxyadenosine in DNA + S-adenosyl-L-methionine = an N(6)-methyl-2'-deoxyadenosine in DNA + S-adenosyl-L-homocysteine + H(+). An alpha subtype methylase that recognizes the double-stranded sequence 5'-GATC-3', methylates A-2 on both strands, and protects the DNA from cleavage by the DpnII endonuclease. The polypeptide is Type II methyltransferase M1.DpnII (Streptococcus pneumoniae).